A 432-amino-acid polypeptide reads, in one-letter code: Adenylosuccinate synthetase (432 aa).

Residues 13–19 (GDEGKGK) and 41–43 (GHT) each bind GTP. The active-site Proton acceptor is D14. Positions 14 and 41 each coordinate Mg(2+). Residues 14 to 17 (DEGK), 39 to 42 (NAGH), T130, R144, Q225, T240, and R304 contribute to the IMP site. The Proton donor role is filled by H42. 300–306 (ATTGRKR) is a binding site for substrate. GTP is bound by residues R306, 332–334 (KLD), and 415–417 (STG).

The protein belongs to the adenylosuccinate synthetase family. In terms of assembly, homodimer. It depends on Mg(2+) as a cofactor.

Its subcellular location is the cytoplasm. The enzyme catalyses IMP + L-aspartate + GTP = N(6)-(1,2-dicarboxyethyl)-AMP + GDP + phosphate + 2 H(+). Its pathway is purine metabolism; AMP biosynthesis via de novo pathway; AMP from IMP: step 1/2. Its function is as follows. Plays an important role in the de novo pathway of purine nucleotide biosynthesis. Catalyzes the first committed step in the biosynthesis of AMP from IMP. The chain is Adenylosuccinate synthetase from Vibrio cholerae serotype O1 (strain M66-2).